Here is a 582-residue protein sequence, read N- to C-terminus: ATP-dependent lipid A-core flippase (582 aa).

The next 5 membrane-spanning stretches (helical) occupy residues leucine 27 to leucine 47, leucine 69 to leucine 89, alanine 142 to tyrosine 162, tryptophan 165 to valine 185, and alanine 249 to leucine 269. In terms of domain architecture, ABC transmembrane type-1 spans isoleucine 28 to arginine 310. The ABC transporter domain occupies valine 342–isoleucine 578. Glycine 376–serine 383 lines the ATP pocket.

Belongs to the ABC transporter superfamily. Lipid exporter (TC 3.A.1.106) family. In terms of assembly, homodimer.

The protein localises to the cell inner membrane. It carries out the reaction ATP + H2O + lipid A-core oligosaccharideSide 1 = ADP + phosphate + lipid A-core oligosaccharideSide 2.. Its function is as follows. Involved in lipopolysaccharide (LPS) biosynthesis. Translocates lipid A-core from the inner to the outer leaflet of the inner membrane. Transmembrane domains (TMD) form a pore in the inner membrane and the ATP-binding domain (NBD) is responsible for energy generation. The sequence is that of ATP-dependent lipid A-core flippase from Vibrio parahaemolyticus serotype O3:K6 (strain RIMD 2210633).